The primary structure comprises 606 residues: Neutral/alkaline invertase 3, chloroplastic (606 aa).

The transit peptide at 1 to 58 (MGIAEVALHSMPGAFAAHSPASNLPLAADAARGRRRRSANSLHSSRALQGPVRFPGLR) directs the protein to the chloroplast. The disordered stretch occupies residues 97 to 126 (RVPGQAVGGNGSVNGSAAKPPPQRRKASSV).

This sequence belongs to the glycosyl hydrolase 100 family.

It is found in the plastid. The protein localises to the chloroplast. It catalyses the reaction Hydrolysis of terminal non-reducing beta-D-fructofuranoside residues in beta-D-fructofuranosides.. Functionally, mitochondrial invertase that cleaves sucrose into glucose and fructose. The chain is Neutral/alkaline invertase 3, chloroplastic from Oryza sativa subsp. japonica (Rice).